A 478-amino-acid chain; its full sequence is Zinc metalloproteinase/disintegrin VMP-II (478 aa).

The first 20 residues, 1–20 (MIQVLLVTICLAVFPYQGSS), serve as a signal peptide directing secretion. The propeptide occupies 21 to 190 (IILESGNVND…KASQLNLTPE (170 aa)). The Peptidase M12B domain maps to 197-393 (RYIELVIVAD…HNPQCMLNEP (197 aa)). Ca(2+) contacts are provided by Glu200 and Asp284. Intrachain disulfides connect Cys308–Cys388, Cys348–Cys372, and Cys350–Cys355. Zn(2+) is bound at residue His333. Glu334 is a catalytic residue. Residues His337 and His343 each contribute to the Zn(2+) site. Ca(2+)-binding residues include Cys388 and Asn391. A propeptide spanning residues 394–405 (LGTDTVSRNELL) is cleaved from the precursor. One can recognise a Disintegrin domain in the interval 414–478 (GSPANPCCDA…ADCPRNRFHA (65 aa)). Intrachain disulfides connect Cys420-Cys443, Cys434-Cys440, Cys439-Cys464, and Cys452-Cys471. The Cell attachment site motif lies at 456-458 (RGD).

The protein belongs to the venom metalloproteinase (M12B) family. P-II subfamily. P-IIe sub-subfamily. In terms of assembly, heterodimer; disulfide-linked (disintegrin). Requires Zn(2+) as cofactor. As to expression, expressed by the venom gland.

Its subcellular location is the secreted. Functionally, impairs hemostasis in the envenomed animal. This recombinant protein inhibits ADP-induced platelet aggregation in whole human blood and this effect is concentration-dependent with an IC(50) of 34 nM. The chain is Zinc metalloproteinase/disintegrin VMP-II from Crotalus viridis viridis (Prairie rattlesnake).